A 304-amino-acid chain; its full sequence is Oxygen-dependent coproporphyrinogen-III oxidase (304 aa).

A substrate-binding site is contributed by Ser95. His99 and His109 together coordinate a divalent metal cation. The active-site Proton donor is the His109. Residue 111 to 113 (NVR) coordinates substrate. A divalent metal cation-binding residues include His148 and His178. The interval 243-278 (YVEFNLVYDRGTLFGLQSGGRTESILMSLPPLVRWR) is important for dimerization. A substrate-binding site is contributed by 261-263 (GGR).

The protein belongs to the aerobic coproporphyrinogen-III oxidase family. Homodimer. Requires a divalent metal cation as cofactor.

The protein resides in the cytoplasm. It carries out the reaction coproporphyrinogen III + O2 + 2 H(+) = protoporphyrinogen IX + 2 CO2 + 2 H2O. The protein operates within porphyrin-containing compound metabolism; protoporphyrin-IX biosynthesis; protoporphyrinogen-IX from coproporphyrinogen-III (O2 route): step 1/1. In terms of biological role, involved in the heme biosynthesis. Catalyzes the aerobic oxidative decarboxylation of propionate groups of rings A and B of coproporphyrinogen-III to yield the vinyl groups in protoporphyrinogen-IX. This is Oxygen-dependent coproporphyrinogen-III oxidase from Thioalkalivibrio sulfidiphilus (strain HL-EbGR7).